Here is a 294-residue protein sequence, read N- to C-terminus: 4-hydroxy-tetrahydrodipicolinate synthase (294 aa).

Position 45 (Thr45) interacts with pyruvate. The active-site Proton donor/acceptor is Tyr133. Lys161 acts as the Schiff-base intermediate with substrate in catalysis. A pyruvate-binding site is contributed by Ile203.

This sequence belongs to the DapA family. As to quaternary structure, homotetramer; dimer of dimers.

The protein resides in the cytoplasm. The enzyme catalyses L-aspartate 4-semialdehyde + pyruvate = (2S,4S)-4-hydroxy-2,3,4,5-tetrahydrodipicolinate + H2O + H(+). Its pathway is amino-acid biosynthesis; L-lysine biosynthesis via DAP pathway; (S)-tetrahydrodipicolinate from L-aspartate: step 3/4. Functionally, catalyzes the condensation of (S)-aspartate-beta-semialdehyde [(S)-ASA] and pyruvate to 4-hydroxy-tetrahydrodipicolinate (HTPA). The polypeptide is 4-hydroxy-tetrahydrodipicolinate synthase (Shewanella sp. (strain W3-18-1)).